A 571-amino-acid polypeptide reads, in one-letter code: MFAVSIVPRTTSCRLSSAFLCQLSIPLTLRLHHHYQHHQPHLPSPLSFQIHSLRKQIDMAAQGGDSYEEALAALSSLITKRSRADKSNKGDRFELVFDYLKLLDLEEDILKMNVIHVAGTKGKGSTCTFTESIIRNYGFRTGLFTSPHLIDVRERFRLDGVDISEEKFLGYFWWCYNRLKERTNEEIPMPTYFRFLALLAFKIFAAEEVDAAILEVGLGGKFDATNAVQKPVVCGISSLGYDHMEILGDTLGKIAGEKAGIFKLGVPAFTVPQPDEAMRVLEEKASETEVNLEVVQPLTARLLSGQKLGLDGEHQYVNAGLAVSLASIWLQQIGKLEVPSRTQMSILPEKFIKGLATASLQGRAQVVPDQYTESRTSGDLVFYLDGAHSPESMEACAKWFSVAVKGDNQSGSSGHLVNGSAGSSHDKWSNETCEQILLFNCMSVRDPNLLLPHLKNMCAKYGVNFKKALFVPNMSVYHKVGTAADLPENDPQVDLSWQFTLQKVWESLVQSERDGEKDGESDGNSEVFTSLPMAIKCLRDTVHESSSATRFQVLVTGSLHLVGDVLRLIRK.

122–125 (GKGS) is a binding site for ATP. Mg(2+) contacts are provided by S146, E215, and H243. ATP contacts are provided by R363 and D385.

The protein belongs to the folylpolyglutamate synthase family. Requires a monovalent cation as cofactor. Expressed in both shoots and roots, but expression in roots is higher compared with shoots. Distinct expression in the quiescent center (QC) region of the root tip. Also expressed in vascular tissues of the cotyledons and hypocotyls, and the first true leaves of 7 days old seedlings.

Its subcellular location is the plastid. It is found in the chloroplast. It catalyses the reaction (6S)-5,6,7,8-tetrahydrofolyl-(gamma-L-Glu)(n) + L-glutamate + ATP = (6S)-5,6,7,8-tetrahydrofolyl-(gamma-L-Glu)(n+1) + ADP + phosphate + H(+). It functions in the pathway cofactor biosynthesis; tetrahydrofolylpolyglutamate biosynthesis. Functionally, catalyzes conversion of folates to polyglutamate derivatives allowing concentration of folate compounds in the cell and the intracellular retention of these cofactors, which are important substrates for most of the folate-dependent enzymes that are involved in one-carbon transfer reactions involved in purine, pyrimidine and amino acid synthesis. Essential for organellar and whole-plant folate homeostasis. Required for postembryonic root development. Generates polyglutamylated folate cofactors to support C1 metabolism required for meristem maintenance and cell expansion during postembryonic root development. This Arabidopsis thaliana (Mouse-ear cress) protein is Folylpolyglutamate synthase.